The sequence spans 434 residues: RHOMBOID-like protein 9, chloroplastic (434 aa).

The N-terminal 68 residues, 1-68, are a transit peptide targeting the chloroplast; sequence MALFPLHHEV…SPRRRLCLVR (68 aa). The next 8 helical transmembrane spans lie at 182–202, 209–229, 238–258, 267–287, 289–309, 326–346, 352–372, and 399–419; these read FYAV…EAAA, MGLL…ILAG, MFLH…LTFG, LFTF…MSFL, TADP…AWLV, LFQK…FGPI, LGAL…LQLG, and FLLF…IGDG.

Belongs to the peptidase S54 family.

Its subcellular location is the plastid. The protein resides in the chloroplast membrane. Functionally, probable rhomboid-type serine protease that catalyzes intramembrane proteolysis. The polypeptide is RHOMBOID-like protein 9, chloroplastic (Arabidopsis thaliana (Mouse-ear cress)).